Consider the following 1108-residue polypeptide: Multidrug resistance regulator 1 (1108 aa).

The span at 1–19 (MSIATTPIETPKSPKSTEP) shows a compositional bias: polar residues. The interval 1–27 (MSIATTPIETPKSPKSTEPQVRKRKKV) is disordered. Residues 31–59 (CTNCRKRKIRCDRQHPCNNCIKSKKHNAC) constitute a DNA-binding region (zn(2)-C6 fungal-type). A compositionally biased stretch (polar residues) spans 68–83 (PANFSTNGSSHGNTVP). 3 disordered regions span residues 68-138 (PANF…SENE), 968-990 (DQTY…LDSR), and 1021-1064 (AQQQ…YYGN). Basic and acidic residues-rich tracts occupy residues 86–104 (RPYE…EAPR) and 114–123 (NERKNSKKSP). Over residues 124 to 138 (DNTVANNQQTASENE) the composition is skewed to polar residues. A coiled-coil region spans residues 134–165 (ASENEVTITLSELNMLKQRLQNIEANINAQSN). Composition is skewed to low complexity over residues 970 to 980 (TYSTSSESSST) and 1023 to 1041 (QQRQ…QSQS).

It localises to the nucleus. Functionally, transcription factor that acts as the central regulator of the MDR1 efflux pump. Other target genes include those encoding oxidoreductases, whose up-regulation in fluconazole-resistant isolates may help to prevent cell damage resulting from the generation of toxic molecules in the presence of fluconazole and thereby contribute to drug resistance. The sequence is that of Multidrug resistance regulator 1 from Candida albicans (strain SC5314 / ATCC MYA-2876) (Yeast).